We begin with the raw amino-acid sequence, 251 residues long: Small ribosomal subunit protein uS3 (251 aa).

The KH type-2 domain maps to 22 to 93 (LNEFFTRELA…GIAIYAERVE (72 aa)). Residues 223 to 251 (TVKSYKQTAEDETETDAPVEAEAEVEATA) form a disordered region. Acidic residues predominate over residues 232-251 (EDETETDAPVEAEAEVEATA).

The protein belongs to the universal ribosomal protein uS3 family. Component of the small ribosomal subunit. Mature ribosomes consist of a small (40S) and a large (60S) subunit. The 40S subunit contains about 32 different proteins and 1 molecule of RNA (18S). The 60S subunit contains 45 different proteins and 3 molecules of RNA (25S, 5.8S and 5S).

The protein localises to the cytoplasm. Functionally, component of the ribosome, a large ribonucleoprotein complex responsible for the synthesis of proteins in the cell. The small ribosomal subunit (SSU) binds messenger RNAs (mRNAs) and translates the encoded message by selecting cognate aminoacyl-transfer RNA (tRNA) molecules. The large subunit (LSU) contains the ribosomal catalytic site termed the peptidyl transferase center (PTC), which catalyzes the formation of peptide bonds, thereby polymerizing the amino acids delivered by tRNAs into a polypeptide chain. The nascent polypeptides leave the ribosome through a tunnel in the LSU and interact with protein factors that function in enzymatic processing, targeting, and the membrane insertion of nascent chains at the exit of the ribosomal tunnel. The protein is Small ribosomal subunit protein uS3 (RPS3) of Candida albicans (strain SC5314 / ATCC MYA-2876) (Yeast).